The sequence spans 131 residues: uncharacterized protein (131 aa).

Residues 16–71 are disordered; it reads MSEQERDEVLEDDDDDEDNKSSQQERDEFVEDDDNNSIQSSPSCAQPLLTQYHDDG. Acidic residues predominate over residues 20-33; it reads ERDEVLEDDDDDED.

This is an uncharacterized protein from Dictyostelium discoideum (Social amoeba).